A 304-amino-acid polypeptide reads, in one-letter code: Acetaldehyde dehydrogenase 4 (304 aa).

Cys131 serves as the catalytic Acyl-thioester intermediate. Residues 162-170 (SAGPGTRKN) and Asn273 contribute to the NAD(+) site.

Belongs to the acetaldehyde dehydrogenase family. In terms of assembly, heterotetramer composed of two BphI (aldolase) and two BphJ (dehydrogenase).

It carries out the reaction acetaldehyde + NAD(+) + CoA = acetyl-CoA + NADH + H(+). The enzyme catalyses propanal + NAD(+) + CoA = propanoyl-CoA + NADH + H(+). It functions in the pathway xenobiotic degradation; polychlorinated biphenyl degradation. With respect to regulation, bound pyruvate or other intermediates in the aldol addition reaction catalyzed by BphI allosterically activates BphJ reductive deacylation activity. In terms of biological role, catalyzes the conversion of acetaldehyde or propanal to acetyl-CoA or propanoyl-CoA, respectively, using NAD(+) and coenzyme A. Displays broad specificity since it can utilize aliphatic aldehydes from two to five carbons in length as substrates; the aldehyde substrates can be directly channeled from the aldolase BphI to the dehydrogenase BphJ. Is the final enzyme in the meta-cleavage pathway for the degradation of polychlorinated biphenyls (PCBs). Is also able to utilize NADP(+) instead of NAD(+). Is not active with succinic semialdehyde or picolinaldehyde as substrates. Can also catalyze the reverse reaction, i.e. the reductive deacylation of acetyl-CoA to acetaldehyde, which is then channeled to the BphI active site. The BphI-BphJ enzyme complex exhibits unique bidirectionality in substrate channeling and allosteric activation. This Paraburkholderia xenovorans (strain LB400) protein is Acetaldehyde dehydrogenase 4 (bphJ).